The primary structure comprises 545 residues: CTP synthase (545 aa).

The amidoligase domain stretch occupies residues 1–266; sequence MTTNYIFVTG…DDYICKRFSL (266 aa). CTP is bound at residue serine 14. Residue serine 14 coordinates UTP. ATP is bound by residues 15–20 and aspartate 72; that span reads SLGKGI. Residues aspartate 72 and glutamate 140 each contribute to the Mg(2+) site. CTP-binding positions include 147–149, 187–192, and lysine 223; these read DIE and KTKPTQ. Residues 187-192 and lysine 223 contribute to the UTP site; that span reads KTKPTQ. Residue 239–241 participates in ATP binding; that stretch reads KDV. Residues 291–542 enclose the Glutamine amidotransferase type-1 domain; sequence TIGMVGKYIE…VKAASEYQKR (252 aa). Glycine 352 contacts L-glutamine. The active-site Nucleophile; for glutamine hydrolysis is cysteine 379. L-glutamine contacts are provided by residues 380–383, glutamate 403, and arginine 470; that span reads LGMQ. Catalysis depends on residues histidine 515 and glutamate 517.

This sequence belongs to the CTP synthase family. Homotetramer.

It carries out the reaction UTP + L-glutamine + ATP + H2O = CTP + L-glutamate + ADP + phosphate + 2 H(+). The catalysed reaction is L-glutamine + H2O = L-glutamate + NH4(+). The enzyme catalyses UTP + NH4(+) + ATP = CTP + ADP + phosphate + 2 H(+). It functions in the pathway pyrimidine metabolism; CTP biosynthesis via de novo pathway; CTP from UDP: step 2/2. Its activity is regulated as follows. Allosterically activated by GTP, when glutamine is the substrate; GTP has no effect on the reaction when ammonia is the substrate. The allosteric effector GTP functions by stabilizing the protein conformation that binds the tetrahedral intermediate(s) formed during glutamine hydrolysis. Inhibited by the product CTP, via allosteric rather than competitive inhibition. In terms of biological role, catalyzes the ATP-dependent amination of UTP to CTP with either L-glutamine or ammonia as the source of nitrogen. Regulates intracellular CTP levels through interactions with the four ribonucleotide triphosphates. The polypeptide is CTP synthase (Citrobacter koseri (strain ATCC BAA-895 / CDC 4225-83 / SGSC4696)).